The following is a 141-amino-acid chain: Large ribosomal subunit protein uL16 (141 aa).

This sequence belongs to the universal ribosomal protein uL16 family. As to quaternary structure, part of the 50S ribosomal subunit.

Binds 23S rRNA and is also seen to make contacts with the A and possibly P site tRNAs. The chain is Large ribosomal subunit protein uL16 from Campylobacter concisus (strain 13826).